The chain runs to 199 residues: Holliday junction resolvase RecU (199 aa).

Thr-82, Asp-84, Glu-97, and Gln-116 together coordinate Mg(2+).

This sequence belongs to the RecU family. Requires Mg(2+) as cofactor.

Its subcellular location is the cytoplasm. It catalyses the reaction Endonucleolytic cleavage at a junction such as a reciprocal single-stranded crossover between two homologous DNA duplexes (Holliday junction).. Functionally, endonuclease that resolves Holliday junction intermediates in genetic recombination. Cleaves mobile four-strand junctions by introducing symmetrical nicks in paired strands. Promotes annealing of linear ssDNA with homologous dsDNA. Required for DNA repair, homologous recombination and chromosome segregation. The protein is Holliday junction resolvase RecU of Streptococcus agalactiae serotype Ia (strain ATCC 27591 / A909 / CDC SS700).